The following is a 343-amino-acid chain: Phenylalanine--tRNA ligase alpha subunit (343 aa).

Glu-256 is a Mg(2+) binding site.

This sequence belongs to the class-II aminoacyl-tRNA synthetase family. Phe-tRNA synthetase alpha subunit type 1 subfamily. As to quaternary structure, tetramer of two alpha and two beta subunits. Requires Mg(2+) as cofactor.

It localises to the cytoplasm. The catalysed reaction is tRNA(Phe) + L-phenylalanine + ATP = L-phenylalanyl-tRNA(Phe) + AMP + diphosphate + H(+). The polypeptide is Phenylalanine--tRNA ligase alpha subunit (Prosthecochloris aestuarii (strain DSM 271 / SK 413)).